The sequence spans 143 residues: Mediator of RNA polymerase II transcription subunit 21 (143 aa).

Positions 53–130 (KEFEKNIDEL…KVRTLTQDFT (78 aa)) form a coiled coil.

The protein belongs to the Mediator complex subunit 21 family. In terms of assembly, component of the Mediator complex.

Its subcellular location is the nucleus. Its function is as follows. Component of the Mediator complex, a coactivator involved in the regulated transcription of nearly all RNA polymerase II-dependent genes. Mediator functions as a bridge to convey information from gene-specific regulatory proteins to the basal RNA polymerase II transcription machinery. Mediator is recruited to promoters by direct interactions with regulatory proteins and serves as a scaffold for the assembly of a functional preinitiation complex with RNA polymerase II and the general transcription factors. The sequence is that of Mediator of RNA polymerase II transcription subunit 21 (SRB7) from Kluyveromyces lactis (strain ATCC 8585 / CBS 2359 / DSM 70799 / NBRC 1267 / NRRL Y-1140 / WM37) (Yeast).